Reading from the N-terminus, the 607-residue chain is Autophagy-related protein 22-2 (607 aa).

A disordered region spans residues 1 to 29 (MTVAPPSPNSPAAELQQRPPRYPGEDTTP). The chain crosses the membrane as a helical span at residues 41–61 (YGIAAEVFAVCGVGSFLPLTL). Asn89 carries N-linked (GlcNAc...) asparagine glycosylation. The next 3 membrane-spanning stretches (helical) occupy residues 119–139 (SFAMYTFSLAVLVQALTLISF), 151–170 (TLLLAFGFIGSATSMLFVFI), and 188–208 (CLGSSFVVLNSFLPVLVANDP). Residues 235-263 (SFSASDAESGPHPAAEAGSGTSSGPASPE) are disordered. Low complexity predominate over residues 247-263 (PAAEAGSGTSSGPASPE). 4 helical membrane-spanning segments follow: residues 274-294 (GVGLGYCAAVLVQILSISLLF), 307-327 (TLPLRFVLLLVGIWWFSFTMV), 379-399 (VLVFLAAWFLLSDAMATVSGT), and 415-435 (VGLLSITATLSGMAGAFLWPV). The N-linked (GlcNAc...) asparagine glycan is linked to Asn445. 4 helical membrane passes run 450–470 (LCIALFEIIPLYGMLAYIPVF), 485–507 (FPLAIVHGVVSGGLSSYCRSFFG), 519–541 (YALYAATDKGSSVIGPAIVGMLI), and 550–570 (GFFFIAPLILMPIPLIWIVNA). Residues 586–607 (KGHETEMSEQTEEAEGLLARGI) form a disordered region.

This sequence belongs to the ATG22 family.

It is found in the vacuole membrane. Functionally, vacuolar effluxer which mediate the efflux of amino acids resulting from autophagic degradation. The release of autophagic amino acids allows the maintenance of protein synthesis and viability during nitrogen starvation. This chain is Autophagy-related protein 22-2 (atg22-2), found in Aspergillus oryzae (strain ATCC 42149 / RIB 40) (Yellow koji mold).